The sequence spans 780 residues: Aconitate hydratase, mitochondrial (780 aa).

Residues 1–27 (MAPYSLLVTRLQKALGVRQYHVASVLC) constitute a mitochondrion transit peptide. Lysine 31 bears the N6-succinyllysine mark. Lysine 50 is subject to N6-acetyllysine; alternate. An N6-succinyllysine; alternate modification is found at lysine 50. Glutamine 99 is a substrate binding site. Lysine 138 and lysine 144 each carry N6-acetyllysine; alternate. N6-succinyllysine; alternate is present on residues lysine 138 and lysine 144. 192-194 (DSH) is a substrate binding site. Position 233 is an N6-acetyllysine; alternate (lysine 233). N6-succinyllysine; alternate is present on lysine 233. Residue cysteine 385 participates in [4Fe-4S] cluster binding. Lysine 411 is modified (N6-succinyllysine). Positions 448 and 451 each coordinate [4Fe-4S] cluster. Positions 474 and 479 each coordinate substrate. Basic and acidic residues predominate over residues 528–537 (DADELPKGEF). The interval 528-560 (DADELPKGEFDPGQDTYQHPPKDSSGQHVDVSP) is disordered. Lysine 549 bears the N6-succinyllysine mark. The segment covering 551–560 (SSGQHVDVSP) has biased composition (polar residues). Serine 559 bears the Phosphoserine mark. Lysine 573 is subject to N6-acetyllysine; alternate. Lysine 573 bears the N6-succinyllysine; alternate mark. 2 positions are modified to N6-succinyllysine: lysine 577 and lysine 591. The residue at position 605 (lysine 605) is an N6-acetyllysine; alternate. Lysine 605 is modified (N6-succinyllysine; alternate). Position 607 (arginine 607) interacts with substrate. An N6-succinyllysine modification is found at lysine 628. Serine 670 carries the post-translational modification Phosphoserine. 670–671 (SR) is a substrate binding site. At lysine 689 the chain carries N6-succinyllysine. Lysine 723 and lysine 730 each carry N6-acetyllysine; alternate. N6-succinyllysine; alternate is present on residues lysine 723 and lysine 730. N6-acetyllysine is present on residues lysine 736, lysine 739, and lysine 743.

It belongs to the aconitase/IPM isomerase family. Monomer. Requires [4Fe-4S] cluster as cofactor. Post-translationally, forms covalent cross-links mediated by transglutaminase TGM2, between a glutamine and the epsilon-amino group of a lysine residue, forming homopolymers and heteropolymers.

It localises to the mitochondrion. It carries out the reaction citrate = D-threo-isocitrate. Its pathway is carbohydrate metabolism; tricarboxylic acid cycle; isocitrate from oxaloacetate: step 2/2. Catalyzes the isomerization of citrate to isocitrate via cis-aconitate. The chain is Aconitate hydratase, mitochondrial (ACO2) from Homo sapiens (Human).